We begin with the raw amino-acid sequence, 89 residues long: Large ribosomal subunit protein bL31B (89 aa).

This sequence belongs to the bacterial ribosomal protein bL31 family. Type B subfamily. In terms of assembly, part of the 50S ribosomal subunit.

This Pseudomonas fluorescens (strain ATCC BAA-477 / NRRL B-23932 / Pf-5) protein is Large ribosomal subunit protein bL31B.